The sequence spans 160 residues: MSGENANSIGSDVTSLIQPGLEQVMQDEGVQVSLINSVLGWCRVHIINPIKTSKIVQSRAFQITMVVLGIILLIAGLALTFVLQGQLGKNAFLFLIPAVIGLVKLLATSVCMEKPCTPEKWRLCKRLLATTEDILDDGQINQSNTIFTMNSSESTSASAS.

2 helical membrane-spanning segments follow: residues 63 to 83 (ITMVVLGIILLIAGLALTFVL) and 92 to 112 (FLFLIPAVIGLVKLLATSVCM).

Its subcellular location is the membrane. The protein is Sulfur-rich protein (srp) of Chlamydophila psittaci (strain ATCC VR-125 / 6BC) (Chlamydia psittaci).